The sequence spans 674 residues: Linear primary-alkylsulfatase (674 aa).

Positions 1-41 (MKLNALSTATHGSRSSPVKLWKFSTSFLLAASIIVSGQSWA) are cleaved as a signal peptide. Zn(2+) contacts are provided by His-192, His-194, Asp-196, His-197, Glu-303, and Glu-322. Sulfate contacts are provided by residues 330-335 (NTYSLR) and Arg-340. A Zn(2+)-binding site is contributed by His-367. A sulfate-binding site is contributed by Tyr-428.

This sequence belongs to the metallo-beta-lactamase superfamily. Type III sulfatase family. In terms of assembly, homodimer. It depends on Zn(2+) as a cofactor.

It is found in the periplasm. It carries out the reaction a primary linear alkyl sulfate ester + H2O = a primary alcohol + sulfate + H(+). Inhibited by EDTA. Slightly activated in the presence of Ca(2+). Alkylsulfatase that cleaves primary alkyl sulfates such as sodium octyl sulfate and the widely used detergent sodium dodecyl sulfate (SDS). This chain is Linear primary-alkylsulfatase, found in Pseudomonas sp.